Here is a 717-residue protein sequence, read N- to C-terminus: Asp/Glu-specific dipeptidyl-peptidase (717 aa).

A signal peptide spans 1–21; sequence MNKRFFPTLLLAFVCSTLAYA. Active-site charge relay system residues include histidine 85, aspartate 226, and serine 652.

It belongs to the peptidase S46 family.

It localises to the secreted. It is found in the cell surface. Enzyme activity is completely blocked by diisopropyl-fluorophosphates, moderately by phenylmethylsulfonyl fluoride (PMSF) and 4-(2-methyl)benzenesulfonyl fluoride, and slightly by pepstatin in vitro. Its function is as follows. Catalyzes the removal of dipeptides from the N-terminus of oligopeptides. Shows a strict specificity for acidic residues (Asp or Glu) in the P1 position, and has a hydrophobic residue preference at the P2 position. Is likely involved in amino acid metabolism and bacterial growth/survival of asaccharolytic P.endodontalis, that utilizes amino acids from extracellular proteinaceous nutrients as energy and carbon sources. The chain is Asp/Glu-specific dipeptidyl-peptidase (dpp11) from Porphyromonas endodontalis (strain ATCC 35406 / DSM 24491 / JCM 8526 / CCUG 16442 / BCRC 14492 / NCTC 13058 / HG 370) (Bacteroides endodontalis).